Reading from the N-terminus, the 301-residue chain is Probable alpha-L-glutamate ligase (301 aa).

One can recognise an ATP-grasp domain in the interval 104 to 287; the sequence is LQLLSRKGIG…IAGMIIEYIE (184 aa). ATP-binding positions include lysine 141, 178-179, aspartate 187, and 211-213; these read EY and RSN. Mg(2+) contacts are provided by aspartate 248, glutamate 260, and asparagine 262. Mn(2+) contacts are provided by aspartate 248, glutamate 260, and asparagine 262.

It belongs to the RimK family. Mg(2+) is required as a cofactor. Mn(2+) serves as cofactor.

The protein is Probable alpha-L-glutamate ligase of Methanococcoides burtonii (strain DSM 6242 / NBRC 107633 / OCM 468 / ACE-M).